We begin with the raw amino-acid sequence, 77 residues long: U18-lycotoxin-Ls1a (77 aa).

Residues 1–22 form the signal peptide; it reads MSPKMQALLLLLGLITLLVVHA. The propeptide occupies 23-34; the sequence is EEELSENTESER. 4 disulfides stabilise this stretch: Cys36-Cys51, Cys43-Cys56, Cys50-Cys67, and Cys58-Cys65.

It belongs to the neurotoxin 02 (plectoxin) family. As to expression, expressed by the venom gland.

The protein localises to the secreted. In Lycosa singoriensis (Wolf spider), this protein is U18-lycotoxin-Ls1a.